We begin with the raw amino-acid sequence, 179 residues long: Peptidyl-tRNA hydrolase (179 aa).

Tyr15 contacts tRNA. His20 serves as the catalytic Proton acceptor. TRNA contacts are provided by Tyr66, Asn68, and Asn114.

Belongs to the PTH family. As to quaternary structure, monomer.

The protein localises to the cytoplasm. The enzyme catalyses an N-acyl-L-alpha-aminoacyl-tRNA + H2O = an N-acyl-L-amino acid + a tRNA + H(+). Functionally, hydrolyzes ribosome-free peptidyl-tRNAs (with 1 or more amino acids incorporated), which drop off the ribosome during protein synthesis, or as a result of ribosome stalling. Catalyzes the release of premature peptidyl moieties from peptidyl-tRNA molecules trapped in stalled 50S ribosomal subunits, and thus maintains levels of free tRNAs and 50S ribosomes. The protein is Peptidyl-tRNA hydrolase of Chlamydia muridarum (strain MoPn / Nigg).